Here is a 252-residue protein sequence, read N- to C-terminus: Imidazole glycerol phosphate synthase subunit HisF (252 aa).

Catalysis depends on residues aspartate 11 and aspartate 130.

Belongs to the HisA/HisF family. Heterodimer of HisH and HisF.

It localises to the cytoplasm. The catalysed reaction is 5-[(5-phospho-1-deoxy-D-ribulos-1-ylimino)methylamino]-1-(5-phospho-beta-D-ribosyl)imidazole-4-carboxamide + L-glutamine = D-erythro-1-(imidazol-4-yl)glycerol 3-phosphate + 5-amino-1-(5-phospho-beta-D-ribosyl)imidazole-4-carboxamide + L-glutamate + H(+). The protein operates within amino-acid biosynthesis; L-histidine biosynthesis; L-histidine from 5-phospho-alpha-D-ribose 1-diphosphate: step 5/9. IGPS catalyzes the conversion of PRFAR and glutamine to IGP, AICAR and glutamate. The HisF subunit catalyzes the cyclization activity that produces IGP and AICAR from PRFAR using the ammonia provided by the HisH subunit. In Staphylococcus aureus (strain MRSA252), this protein is Imidazole glycerol phosphate synthase subunit HisF.